Reading from the N-terminus, the 167-residue chain is NAD(P)H-quinone oxidoreductase subunit I, chloroplastic (167 aa).

4Fe-4S ferredoxin-type domains follow at residues G55–K84 and L95–E124. Residues C64, C67, C70, C74, C104, C107, C110, and C114 each coordinate [4Fe-4S] cluster.

It belongs to the complex I 23 kDa subunit family. In terms of assembly, NDH is composed of at least 16 different subunits, 5 of which are encoded in the nucleus. Requires [4Fe-4S] cluster as cofactor.

It is found in the plastid. Its subcellular location is the chloroplast thylakoid membrane. The catalysed reaction is a plastoquinone + NADH + (n+1) H(+)(in) = a plastoquinol + NAD(+) + n H(+)(out). It carries out the reaction a plastoquinone + NADPH + (n+1) H(+)(in) = a plastoquinol + NADP(+) + n H(+)(out). Functionally, NDH shuttles electrons from NAD(P)H:plastoquinone, via FMN and iron-sulfur (Fe-S) centers, to quinones in the photosynthetic chain and possibly in a chloroplast respiratory chain. The immediate electron acceptor for the enzyme in this species is believed to be plastoquinone. Couples the redox reaction to proton translocation, and thus conserves the redox energy in a proton gradient. The protein is NAD(P)H-quinone oxidoreductase subunit I, chloroplastic of Arabis hirsuta (Hairy rock-cress).